The sequence spans 588 residues: Adenine deaminase (588 aa).

This sequence belongs to the metallo-dependent hydrolases superfamily. Adenine deaminase family. In terms of assembly, homodimer. Requires Mn(2+) as cofactor.

It carries out the reaction adenine + H2O + H(+) = hypoxanthine + NH4(+). The polypeptide is Adenine deaminase (Escherichia coli O17:K52:H18 (strain UMN026 / ExPEC)).